The primary structure comprises 171 residues: Co-chaperone protein HscB (171 aa).

A J domain is found at 2–74 (DYFTLFGLPA…LTRAEYLLSL (73 aa)).

Belongs to the HscB family. In terms of assembly, interacts with HscA and stimulates its ATPase activity. Interacts with IscU.

In terms of biological role, co-chaperone involved in the maturation of iron-sulfur cluster-containing proteins. Seems to help targeting proteins to be folded toward HscA. The chain is Co-chaperone protein HscB from Citrobacter koseri (strain ATCC BAA-895 / CDC 4225-83 / SGSC4696).